A 728-amino-acid chain; its full sequence is NF-kappa-B inhibitor zeta (728 aa).

The disordered stretch occupies residues 45 to 107 (GAGDTGYLSA…PHMGVGRQQR (63 aa)). Over residues 53–82 (SAVPSAPGSPGSDSSDFSSTSSVSSCGAVE) the composition is skewed to low complexity. Over residues 83–96 (SRPRGGARAERPQV) the composition is skewed to basic and acidic residues. The region spanning 107–129 (RGPFQGVRVKNSVKELLLHIRSN) is the OCA domain. The Nuclear localization signal signature appears at 163–178 (KRKGPDPLSDGPVCKR). Polar residues-rich tracts occupy residues 241-250 (PTVPQNSPRD) and 268-288 (QPFQVSGSPQMMDQASMYQYS). A disordered region spans residues 241-334 (PTVPQNSPRD…SQSPKYDSNL (94 aa)). Low complexity predominate over residues 303–315 (QQQHQQNYPHNSP). The span at 316–330 (LQFSPYSRMSQSPKY) shows a compositional bias: polar residues. The interval 329–403 (KYDSNLFDTH…VGVHDVGSHS (75 aa)) is required for transcriptional activity. Positions 414-728 (MGSPMNTTQL…KSIQQRAPPY (315 aa)) are interaction with NFKB1/p50. ANK repeat units follow at residues 453–482 (DGDTFLHIAVAQGRRALSYVLARKMNALHM), 489–518 (NGQSAFQVAVAANQHLIVQDLVNLGAQVNT), 522–551 (WGRTPLHVCAEKGHSQVLQAIQKGAVRSNQ), 561–589 (DGLTPLHCAVVAHNAVVHELQRNRQSHSP), 591–617 (VQDLLLRNKSLVDTIKCLIQMGAAVEA), 622–651 (SGRTALHLAAEEANLELIRLFLELPSCLSF), and 658–691 (NGNTALHVAASLQYRVTQLDAVRLLMRKGADPST).

As to quaternary structure, interacts with NFKB1/p50. Interacts with RELA. Interacts with AKIRIN2. Expressed in kidney, liver, lung and heart. Expressed at very low levels in skeletal muscle, spleen and brain.

The protein localises to the nucleus. Its function is as follows. Involved in regulation of NF-kappa-B transcription factor complexes. Inhibits NF-kappa-B activity without affecting its nuclear translocation upon stimulation. Inhibits DNA-binding of RELA and NFKB1/p50, and of the NF-kappa-B p65-p50 heterodimer and the NF-kappa-B p50-p50 homodimer. Also seems to activate NF-kappa-B-mediated transcription. In vitro, upon association with NFKB1/p50 has transcriptional activation activity and, together with NFKB1/p50 and RELA, is recruited to LCN2 promoters. Promotes transcription of LCN2 and DEFB4. Is recruited to IL-6 promoters and activates IL-6 but decreases TNF-alpha production in response to LPS. Seems to be involved in the induction of inflammatory genes activated through TLR/IL-1 receptor signaling. Involved in the induction of T helper 17 cells (Th17) differentiation upon recognition of antigen by T cell antigen receptor (TCR). The protein is NF-kappa-B inhibitor zeta (Nfkbiz) of Mus musculus (Mouse).